A 101-amino-acid polypeptide reads, in one-letter code: NAD(P)H-quinone oxidoreductase subunit 4L, chloroplastic (101 aa).

A run of 3 helical transmembrane segments spans residues 2-22 (ILEH…YGLI), 32-52 (MCLE…SDFF), and 61-81 (IFCI…LAIV).

Belongs to the complex I subunit 4L family. In terms of assembly, NDH is composed of at least 16 different subunits, 5 of which are encoded in the nucleus.

It is found in the plastid. The protein localises to the chloroplast thylakoid membrane. It catalyses the reaction a plastoquinone + NADH + (n+1) H(+)(in) = a plastoquinol + NAD(+) + n H(+)(out). The catalysed reaction is a plastoquinone + NADPH + (n+1) H(+)(in) = a plastoquinol + NADP(+) + n H(+)(out). Functionally, NDH shuttles electrons from NAD(P)H:plastoquinone, via FMN and iron-sulfur (Fe-S) centers, to quinones in the photosynthetic chain and possibly in a chloroplast respiratory chain. The immediate electron acceptor for the enzyme in this species is believed to be plastoquinone. Couples the redox reaction to proton translocation, and thus conserves the redox energy in a proton gradient. The chain is NAD(P)H-quinone oxidoreductase subunit 4L, chloroplastic from Olimarabidopsis pumila (Dwarf rocket).